Consider the following 714-residue polypeptide: ATP-dependent DNA helicase DinG (714 aa).

Residues 17–294 (ALQDQIPDFI…TSMEQFRPKT (278 aa)) form the Helicase ATP-binding domain. Residue 54–61 (APTGVGKT) coordinates ATP. [4Fe-4S] cluster is bound by residues Cys120, Cys194, Cys199, and Cys205. Positions 248-251 (DEGH) match the DEAH box motif. The 182-residue stretch at 517–698 (HIAEMAAYFR…VFPIEQPAVP (182 aa)) folds into the Helicase C-terminal domain.

The protein belongs to the helicase family. DinG subfamily. Type 1 sub-subfamily. The cofactor is [4Fe-4S] cluster.

It catalyses the reaction Couples ATP hydrolysis with the unwinding of duplex DNA at the replication fork by translocating in the 5'-3' direction. This creates two antiparallel DNA single strands (ssDNA). The leading ssDNA polymer is the template for DNA polymerase III holoenzyme which synthesizes a continuous strand.. The catalysed reaction is ATP + H2O = ADP + phosphate + H(+). DNA-dependent ATPase and 5'-3' DNA helicase. Unwinds D-loops, R-loops, forked DNA and G-quadruplex DNA. The protein is ATP-dependent DNA helicase DinG of Salmonella choleraesuis (strain SC-B67).